A 244-amino-acid polypeptide reads, in one-letter code: Eukaryotic translation initiation factor 4E type 1B (244 aa).

The span at 1–26 (MNKVEGGGHKEEVVVKEKEVVKEKPS) shows a compositional bias: basic and acidic residues. The disordered stretch occupies residues 1-57 (MNKVEGGGHKEEVVVKEKEVVKEKPSEATAEGVQAGEAKDLPGSLKTQRRKAHREHP). An EIF4EBP1/2/3 binding region spans residues 65–68 (HPLQ). 84–85 (WQ) lines the mRNA pocket. The tract at residues 101 to 105 (WAVYS) is EIF4EBP1/2/3 binding. Residue 130 to 131 (WE) participates in mRNA binding. The segment at 160–167 (ETLLCLVG) is EIF4EBP1/2/3 binding. MRNA contacts are provided by residues 185-190 (RTKRDK) and 233-235 (AKS).

It belongs to the eukaryotic initiation factor 4E family. EIF4F is a multi-subunit complex, the composition of which varies with external and internal environmental conditions. It is composed of at least EIF4A, EIF4E and EIF4G.

Its function is as follows. Recognizes and binds the 7-methylguanosine-containing mRNA cap during an early step in the initiation of protein synthesis and facilitates ribosome binding by inducing the unwinding of the mRNAs secondary structures. This is Eukaryotic translation initiation factor 4E type 1B (Eif4e1b) from Mus musculus (Mouse).